Consider the following 347-residue polypeptide: NADH-ubiquinone oxidoreductase chain 2 (347 aa).

10 consecutive transmembrane segments (helical) span residues 13–33 (IVLGTMIVMTSSHWLMIWMGF), 59–79 (YFLTQATASMLLMLAIIINLV), 96–116 (IIMTVALAMKMGLAPFHFWVP), 122–142 (ISLLSGLILLTWQKLAPLSVL), 144–164 (VISPIINLDLLLTMSILSILI), 178–200 (ILAYSSIAHMGWMTSILIFNPMM), 210–232 (LMTATTFTLFMTTSTTTTLALSH), 246–266 (IIMLSLGGLPPLVGFLPKWMI), 276–296 (IILATLMAITALLNLFFYMRL), and 326–346 (LPMLIVLSTMTLPLAPAMILL).

The protein belongs to the complex I subunit 2 family. In terms of assembly, core subunit of respiratory chain NADH dehydrogenase (Complex I) which is composed of 45 different subunits. Interacts with TMEM242.

It is found in the mitochondrion inner membrane. It carries out the reaction a ubiquinone + NADH + 5 H(+)(in) = a ubiquinol + NAD(+) + 4 H(+)(out). Its function is as follows. Core subunit of the mitochondrial membrane respiratory chain NADH dehydrogenase (Complex I) which catalyzes electron transfer from NADH through the respiratory chain, using ubiquinone as an electron acceptor. Essential for the catalytic activity and assembly of complex I. This is NADH-ubiquinone oxidoreductase chain 2 from Rhynchonycteris naso (Brazilian long-nosed bat).